A 567-amino-acid chain; its full sequence is Microtubule-associated protein 70-1 (567 aa).

Positions V38–D341 form a coiled coil. Positions I220–S440 are required for targeting to microtubules. Disordered stretches follow at residues K425–S457 and L534–M567. Residues S440–N453 are compositionally biased toward basic and acidic residues. A coiled-coil region spans residues K516–F545.

The protein belongs to the MAP70 family.

It is found in the cytoplasm. Its subcellular location is the cytoskeleton. Functionally, plant-specific protein that interact with microtubules. The protein is Microtubule-associated protein 70-1 (MAP70.1) of Oryza sativa subsp. japonica (Rice).